The primary structure comprises 368 residues: Methionine import ATP-binding protein MetN (368 aa).

An ABC transporter domain is found at Ile-5–Ile-260. Residue Gly-41–Ser-48 coordinates ATP.

The protein belongs to the ABC transporter superfamily. Methionine importer (TC 3.A.1.24) family. In terms of assembly, the complex is composed of two ATP-binding proteins (MetN), two transmembrane proteins (MetI) and a solute-binding protein (MetQ).

The protein resides in the cell membrane. The catalysed reaction is L-methionine(out) + ATP + H2O = L-methionine(in) + ADP + phosphate + H(+). It carries out the reaction D-methionine(out) + ATP + H2O = D-methionine(in) + ADP + phosphate + H(+). Functionally, part of the ABC transporter complex MetNIQ involved in methionine import. Responsible for energy coupling to the transport system. The polypeptide is Methionine import ATP-binding protein MetN (Lactococcus lactis subsp. cremoris (strain SK11)).